The chain runs to 601 residues: MAESYLQNGFRRKTLSVKVGNLFVGSEHSIKIQSMTTTATTDVEGTVRQIYALQECGCEIVRVTVQGLKEVGACEQIKDRLVQQNVTIPLVADIHFFPQAAIHVADFVDKVRINPGNYVDKRNMFSGKIYSDEQYTRSLERLFEKFSPLVAKCKRLGRAMRIGVNHGSLSERIMQRYGDTIEGMVFSALEYAEVCVNMDYHNIVFSMKSSNPRTMVAAYRALARELDQRKWLYPLHLGVTEAGSGMDGMIKSSVGIGTLLSEGLGDTIRCSLTGSPTLEIPVCLDLLKETAKYSKSTKKYNPFEIYHSKQLTTQTTPKHFPVENVYGFLVGLTKDHLLTIEPNTLLQCLGVDITTGKKDLTSPDGVVIPKSMRSSAIVSEIEKHLRIFYKEDAPILNEMNEELWLSDKTLATPFVYFEVESIYQARRFFALRQNYSQPVCLSFSLKANLSKNSAAIDLSIRLGALLLDGLGSCVLFNFSDLKLARTLGFSILQSANIRSTTVEYISCPGCGRTLFDLPEVSQRIKERTKHLPGGLKIAVMGCIVNGPGEMADADFGYVGSKPGMIDLYVKHKCVKSYVPMENAEEELIQLLKEHGVWKEPE.

4 residues coordinate [4Fe-4S] cluster: C507, C510, C542, and E549.

It belongs to the IspG family. Requires [4Fe-4S] cluster as cofactor.

It catalyses the reaction (2E)-4-hydroxy-3-methylbut-2-enyl diphosphate + oxidized [flavodoxin] + H2O + 2 H(+) = 2-C-methyl-D-erythritol 2,4-cyclic diphosphate + reduced [flavodoxin]. The protein operates within isoprenoid biosynthesis; isopentenyl diphosphate biosynthesis via DXP pathway; isopentenyl diphosphate from 1-deoxy-D-xylulose 5-phosphate: step 5/6. In terms of biological role, converts 2C-methyl-D-erythritol 2,4-cyclodiphosphate (ME-2,4cPP) into 1-hydroxy-2-methyl-2-(E)-butenyl 4-diphosphate. The sequence is that of 4-hydroxy-3-methylbut-2-en-1-yl diphosphate synthase (flavodoxin) from Chlamydia muridarum (strain MoPn / Nigg).